Here is a 257-residue protein sequence, read N- to C-terminus: Hydroxyacylglutathione hydrolase (257 aa).

The Zn(2+) site is built by H54, H56, D58, H59, H113, D137, and H175.

Belongs to the metallo-beta-lactamase superfamily. Glyoxalase II family. In terms of assembly, monomer. Zn(2+) serves as cofactor.

The enzyme catalyses an S-(2-hydroxyacyl)glutathione + H2O = a 2-hydroxy carboxylate + glutathione + H(+). The protein operates within secondary metabolite metabolism; methylglyoxal degradation; (R)-lactate from methylglyoxal: step 2/2. Thiolesterase that catalyzes the hydrolysis of S-D-lactoyl-glutathione to form glutathione and D-lactic acid. The sequence is that of Hydroxyacylglutathione hydrolase from Rippkaea orientalis (strain PCC 8801 / RF-1) (Cyanothece sp. (strain PCC 8801)).